Here is a 345-residue protein sequence, read N- to C-terminus: Methylthioribose-1-phosphate isomerase 2 (345 aa).

Substrate is bound by residues 47 to 49, R88, and Q194; that span reads RGA. D235 functions as the Proton donor in the catalytic mechanism. Residue 245 to 246 coordinates substrate; it reads NK.

The protein belongs to the eIF-2B alpha/beta/delta subunits family. MtnA subfamily.

The catalysed reaction is 5-(methylsulfanyl)-alpha-D-ribose 1-phosphate = 5-(methylsulfanyl)-D-ribulose 1-phosphate. The protein operates within amino-acid biosynthesis; L-methionine biosynthesis via salvage pathway; L-methionine from S-methyl-5-thio-alpha-D-ribose 1-phosphate: step 1/6. Functionally, catalyzes the interconversion of methylthioribose-1-phosphate (MTR-1-P) into methylthioribulose-1-phosphate (MTRu-1-P). In Pseudothermotoga lettingae (strain ATCC BAA-301 / DSM 14385 / NBRC 107922 / TMO) (Thermotoga lettingae), this protein is Methylthioribose-1-phosphate isomerase 2.